The primary structure comprises 265 residues: Metal-activated transcriptional activator protein AMT1 (265 aa).

Positions 1–40 form a DNA-binding region, copper-fist; the sequence is MVVINGVKYACDSCIKSHKAAQCEHNDRPLKILKPRGRPP. Residues C11, C14, C23, and H25 each coordinate Zn(2+). The tract at residues 103–129 is disordered; the sequence is RRKRTQKSNKKDNLSINSPTNNSPSPA. A compositionally biased stretch (low complexity) spans 119-128; the sequence is NSPTNNSPSP.

It is found in the nucleus. Trans-acting regulatory protein that activates transcription of the MT genes (metallothionein) in response to copper or silver ions. This chain is Metal-activated transcriptional activator protein AMT1 (AMT1), found in Candida glabrata (strain ATCC 2001 / BCRC 20586 / JCM 3761 / NBRC 0622 / NRRL Y-65 / CBS 138) (Yeast).